The chain runs to 507 residues: Maturase K (507 aa).

This sequence belongs to the intron maturase 2 family. MatK subfamily.

It localises to the plastid. The protein resides in the chloroplast. In terms of biological role, usually encoded in the trnK tRNA gene intron. Probably assists in splicing its own and other chloroplast group II introns. This Persea americana (Avocado) protein is Maturase K.